We begin with the raw amino-acid sequence, 144 residues long: Granulocyte-macrophage colony-stimulating factor (144 aa).

A signal peptide spans 1 to 17 (MWLQNLLLLGTVVCSIS). O-linked (GalNAc...) serine glycosylation is present at serine 24. The O-linked (GalNAc...) threonine glycan is linked to threonine 27. N-linked (GlcNAc...) asparagine glycans are attached at residues asparagine 44, asparagine 47, and asparagine 54. Intrachain disulfides connect cysteine 71–cysteine 113 and cysteine 105–cysteine 138.

This sequence belongs to the GM-CSF family. As to quaternary structure, monomer. The signaling GM-CSF receptor complex is a dodecamer of two head-to-head hexamers of two alpha, two beta, and two ligand subunits.

The protein resides in the secreted. Cytokine that stimulates the growth and differentiation of hematopoietic precursor cells from various lineages, including granulocytes, macrophages, eosinophils and erythrocytes. The chain is Granulocyte-macrophage colony-stimulating factor (CSF2) from Sus scrofa (Pig).